We begin with the raw amino-acid sequence, 369 residues long: Protein arginine N-methyltransferase 1-A (369 aa).

One can recognise an SAM-dependent MTase PRMT-type domain in the interval 48 to 369; it reads KDYYFDSYAH…LSCSTDYRMR (322 aa). The S-adenosyl-L-methionine site is built by His61, Arg70, Gly94, Glu116, and Glu145. Catalysis depends on residues Glu160 and Glu169.

The protein belongs to the class I-like SAM-binding methyltransferase superfamily. Protein arginine N-methyltransferase family. As to quaternary structure, homodimer. Homooctamer; individual homodimers associates to form a homooctamer and homooligomerization is required for proper localization to the cell membrane. Individual homodimers can associate to form a homohexamer. Component of a complex with lsm14a/rap55a. Interacts with cirbp.

It localises to the nucleus. It is found in the nucleoplasm. Its subcellular location is the cytoplasm. The protein localises to the cytosol. It carries out the reaction L-arginyl-[protein] + 2 S-adenosyl-L-methionine = N(omega),N(omega)-dimethyl-L-arginyl-[protein] + 2 S-adenosyl-L-homocysteine + 2 H(+). It catalyses the reaction L-arginyl-[protein] + S-adenosyl-L-methionine = N(omega)-methyl-L-arginyl-[protein] + S-adenosyl-L-homocysteine + H(+). The enzyme catalyses N(omega)-methyl-L-arginyl-[protein] + S-adenosyl-L-methionine = N(omega),N(omega)-dimethyl-L-arginyl-[protein] + S-adenosyl-L-homocysteine + H(+). Functionally, arginine methyltransferase that methylates (mono and asymmetric dimethylation) the guanidino nitrogens of arginyl residues present in target proteins. Constitutes the main enzyme that mediates monomethylation and asymmetric dimethylation of histone H4 'Arg-4' (H4R3me1 and H4R3me2a, respectively), a specific tag for epigenetic transcriptional activation. Methylates cirbp to regulate its subcellular location. Acts transiently during metamorphosis as a transcription coactivator, enhancing thyroid hormone (T3) receptor (TR)-mediated transcription by enhancing TR binding to the T3 response element (TRE), and histone modification through recruitment of other coactivators. The sequence is that of Protein arginine N-methyltransferase 1-A (prmt1-a) from Xenopus laevis (African clawed frog).